The following is a 90-amino-acid chain: Cell division protein CrgA (90 aa).

The disordered stretch occupies residues 1–25 (MPKARVTKNETAPVSSNPSANRTPV). Positions 9–22 (NETAPVSSNPSANR) are enriched in polar residues. Transmembrane regions (helical) follow at residues 38 to 58 (VIMF…YLVG) and 67 to 87 (LGAW…LMTM).

This sequence belongs to the CrgA family.

The protein resides in the cell membrane. In terms of biological role, involved in cell division. The chain is Cell division protein CrgA from Corynebacterium glutamicum (strain R).